A 931-amino-acid chain; its full sequence is Isoleucine--tRNA ligase (931 aa).

The 'HIGH' region motif lies at 58 to 68; that stretch reads PYANGHLHCGH. Glutamate 559 lines the L-isoleucyl-5'-AMP pocket. The 'KMSKS' region signature appears at 600 to 604; it reads KLSKS. ATP is bound at residue lysine 603. Zn(2+) contacts are provided by cysteine 894, cysteine 897, cysteine 914, and cysteine 917.

Belongs to the class-I aminoacyl-tRNA synthetase family. IleS type 1 subfamily. Monomer. The cofactor is Zn(2+).

It is found in the cytoplasm. The enzyme catalyses tRNA(Ile) + L-isoleucine + ATP = L-isoleucyl-tRNA(Ile) + AMP + diphosphate. Catalyzes the attachment of isoleucine to tRNA(Ile). As IleRS can inadvertently accommodate and process structurally similar amino acids such as valine, to avoid such errors it has two additional distinct tRNA(Ile)-dependent editing activities. One activity is designated as 'pretransfer' editing and involves the hydrolysis of activated Val-AMP. The other activity is designated 'posttransfer' editing and involves deacylation of mischarged Val-tRNA(Ile). The sequence is that of Isoleucine--tRNA ligase from Legionella pneumophila (strain Lens).